Reading from the N-terminus, the 311-residue chain is Probable 5-dehydro-4-deoxyglucarate dehydratase (311 aa).

This sequence belongs to the DapA family.

It catalyses the reaction 5-dehydro-4-deoxy-D-glucarate + H(+) = 2,5-dioxopentanoate + CO2 + H2O. It functions in the pathway carbohydrate acid metabolism; D-glucarate degradation; 2,5-dioxopentanoate from D-glucarate: step 2/2. This Ralstonia nicotianae (strain ATCC BAA-1114 / GMI1000) (Ralstonia solanacearum) protein is Probable 5-dehydro-4-deoxyglucarate dehydratase.